The primary structure comprises 319 residues: Transcription factor jun-1 (319 aa).

2 disordered regions span residues 1–52 and 216–264; these read MEED…EKES and NGVN…CRQK. Low complexity predominate over residues 8-19; it reads PPSSSTSSESPE. Positions 28 to 38 are enriched in basic residues; it reads PTRRRKNSKKD. The basic motif stretch occupies residues 244-285; the sequence is KKKLERKRARNRQAATKCRQKKMDRIKELEEQVLHEKHRGQR. In terms of domain architecture, bZIP spans 244 to 307; it reads KKKLERKRAR…EHFRRTVEHH (64 aa). The interval 286–293 is leucine-zipper; sequence LDAELLEL.

The protein belongs to the bZIP family. Jun subfamily. Heterodimer; with fos-1. In terms of tissue distribution, isoform a, isoform b, isoform c and isoform d are expressed in the spermatheca.

Its subcellular location is the nucleus. Transcription factor that recognizes and binds to the AP-1 non-canonical enhancer heptamer motif 5'-TTAGTCA-3'. Required for ovulation. Controls plc-1 expression in the spermatheca to regulate spermathecal valve dilation. This chain is Transcription factor jun-1, found in Caenorhabditis elegans.